The following is a 389-amino-acid chain: Succinate--CoA ligase [ADP-forming] subunit beta (389 aa).

Residues 9–244 (KEILRKFGVA…LDEEDPAEVE (236 aa)) form the ATP-grasp domain. Residues Lys-46, 53 to 55 (GRG), Glu-99, Ala-102, and Glu-107 contribute to the ATP site. Asn-199 and Asp-213 together coordinate Mg(2+). Substrate is bound by residues Asn-264 and 321 to 323 (GIM).

Belongs to the succinate/malate CoA ligase beta subunit family. As to quaternary structure, heterotetramer of two alpha and two beta subunits. Requires Mg(2+) as cofactor.

It catalyses the reaction succinate + ATP + CoA = succinyl-CoA + ADP + phosphate. It carries out the reaction GTP + succinate + CoA = succinyl-CoA + GDP + phosphate. It functions in the pathway carbohydrate metabolism; tricarboxylic acid cycle; succinate from succinyl-CoA (ligase route): step 1/1. In terms of biological role, succinyl-CoA synthetase functions in the citric acid cycle (TCA), coupling the hydrolysis of succinyl-CoA to the synthesis of either ATP or GTP and thus represents the only step of substrate-level phosphorylation in the TCA. The beta subunit provides nucleotide specificity of the enzyme and binds the substrate succinate, while the binding sites for coenzyme A and phosphate are found in the alpha subunit. The protein is Succinate--CoA ligase [ADP-forming] subunit beta of Paraburkholderia xenovorans (strain LB400).